Here is a 400-residue protein sequence, read N- to C-terminus: Subtilisin-like protease 7 (400 aa).

The N-terminal stretch at M1–G20 is a signal peptide. Residues A21–N119 constitute a propeptide that is removed on maturation. Residues K36–I118 enclose the Inhibitor I9 domain. Residues S129–K400 enclose the Peptidase S8 domain. Residues D161 and H192 each act as charge relay system in the active site. 2 N-linked (GlcNAc...) asparagine glycosylation sites follow: N222 and N252. S346 acts as the Charge relay system in catalysis. A glycan (N-linked (GlcNAc...) asparagine) is linked at N396.

Belongs to the peptidase S8 family.

The protein resides in the secreted. Secreted subtilisin-like serine protease with keratinolytic activity that contributes to pathogenicity. This chain is Subtilisin-like protease 7 (SUB7), found in Arthroderma otae (strain ATCC MYA-4605 / CBS 113480) (Microsporum canis).